The following is a 267-amino-acid chain: MIDRRKVRNAFHRGAADYDAYAAVQKRVMERILSLLFAEGVEPARILDVGAGTGALALRLADRYPSAAITCVDLAHGMARQARDNLGRTMERLVAVADAEHLPLRDGVFDLVVSTSTFQWLTTLDRAFAEARRVLADDGLFAFALFGDGTFKELKASYRAALHSVPRGGRDRTHRFFTRDEVRAALARAGFRSVEVFDEDEVEYHPDVPAFLRSVKRIGAGNASPVAGRGLSGRRVMETMMRTYAERFGGADGIPATYTVVYGVGKR.

It belongs to the methyltransferase superfamily.

It catalyses the reaction malonyl-[ACP] + S-adenosyl-L-methionine = malonyl-[ACP] methyl ester + S-adenosyl-L-homocysteine. Its pathway is cofactor biosynthesis; biotin biosynthesis. In terms of biological role, converts the free carboxyl group of a malonyl-thioester to its methyl ester by transfer of a methyl group from S-adenosyl-L-methionine (SAM). It allows to synthesize pimeloyl-ACP via the fatty acid synthetic pathway. The chain is Malonyl-[acyl-carrier protein] O-methyltransferase from Geobacter sulfurreducens (strain ATCC 51573 / DSM 12127 / PCA).